Consider the following 230-residue polypeptide: Cytidylate kinase (230 aa).

10–18 (GPAGSGKST) is an ATP binding site.

Belongs to the cytidylate kinase family. Type 1 subfamily.

It localises to the cytoplasm. It catalyses the reaction CMP + ATP = CDP + ADP. It carries out the reaction dCMP + ATP = dCDP + ADP. The protein is Cytidylate kinase of Leptospira borgpetersenii serovar Hardjo-bovis (strain L550).